Consider the following 405-residue polypeptide: Chalcone synthase (405 aa).

Cysteine 170 is an active-site residue.

The protein belongs to the thiolase-like superfamily. Chalcone/stilbene synthases family.

The catalysed reaction is (E)-4-coumaroyl-CoA + 3 malonyl-CoA + 3 H(+) = 2',4,4',6'-tetrahydroxychalcone + 3 CO2 + 4 CoA. Its pathway is secondary metabolite biosynthesis; flavonoid biosynthesis. Functionally, the primary product of this enzyme is 4,2',4',6'-tetrahydroxychalcone (also termed naringenin-chalcone or chalcone) which can under specific conditions spontaneously isomerize into naringenin. This chain is Chalcone synthase (CHS), found in Equisetum arvense (Field horsetail).